Consider the following 424-residue polypeptide: Synaptotagmin-1 (424 aa).

At 1–60 the chain is on the vesicular side; the sequence is MVSESHHEALAAPPATTVAAALPSNVTEPAAPGGGGGKEDAFSNLKKKFMNELNKIPLPP. A glycan (N-linked (GlcNAc...) asparagine) is linked at Asn25. A helical membrane pass occupies residues 61–82; sequence WALIAIAIVAVLLILTCCFCLC. Residues Cys77, Cys78, Cys80, Cys82, and Cys85 are each lipidated (S-palmitoyl cysteine). The Cytoplasmic segment spans residues 83-424; sequence KKCLFKKKNK…EVDAMLAVKK (342 aa). The segment at 117 to 142 is disordered; sequence KDQALKDDDAETGLTDGEEKEEPKEV. Positions 124–136 are enriched in acidic residues; the sequence is DDAETGLTDGEEK. Residues 138–384 are phospholipid binding; the sequence is EPKEVEKLGK…AIGKVFVGYN (247 aa). 2 consecutive C2 domains span residues 144–263 and 275–408; these read KLGK…EEWR and KLGD…AQWH. Positions 174, 175, 181, 233, 234, 235, 238, 239, 241, 306, 312, 366, 368, and 374 each coordinate Ca(2+).

This sequence belongs to the synaptotagmin family. Homotetramer. Requires Ca(2+) as cofactor.

It is found in the cytoplasmic vesicle. Its subcellular location is the secretory vesicle membrane. The protein resides in the secretory vesicle. The protein localises to the synaptic vesicle membrane. It localises to the chromaffin granule membrane. It is found in the cytoplasm. Functionally, calcium sensor that participates in triggering neurotransmitter release at the synapse. May have a regulatory role in the membrane interactions during trafficking of synaptic vesicles at the active zone of the synapse. It binds acidic phospholipids with a specificity that requires the presence of both an acidic head group and a diacyl backbone. May play a role in dendrite formation by melanocytes. The polypeptide is Synaptotagmin-1 (SYT1) (Gallus gallus (Chicken)).